We begin with the raw amino-acid sequence, 158 residues long: Osmosensory protein A (158 aa).

A Phosphothreonine; by PknD modification is found at T2. Positions 28–139 (AQIRAYLHHL…RSVHKALHDL (112 aa)) constitute an STAS domain.

This sequence belongs to the anti-sigma-factor antagonist family. Interacts with Rv2638. Phosphorylation abolishes binding to Rv2638. Post-translationally, phosphorylated on Thr-2 by the serine/threonine-protein kinase PknD. Also phosphorylated to a lesser extent by PknB and PknE. Dephosphorylated by PstP.

With respect to regulation, regulated by PknD under osmotic stress. Functionally, part of a signaling pathway that enables adaptation to osmotic stress through cell wall remodeling and virulence factor production. Unphosphorylated OprA forms a complex with the anti-anti-sigma-factor paralog Rv2638 that dissociates on OprA phosphorylation by PknD. Phosphorylation of OprA may stimulate the release of SigF from an inhibitory complex and enable the transcription of osmotically regulated genes, such as oprA and the ESX-1-associated virulence factor espA. This Mycobacterium tuberculosis (strain ATCC 25618 / H37Rv) protein is Osmosensory protein A.